The chain runs to 242 residues: Pyridoxine 5'-phosphate synthase (242 aa).

3-amino-2-oxopropyl phosphate is bound at residue N7. Residue 9–10 participates in 1-deoxy-D-xylulose 5-phosphate binding; it reads DH. Residue R18 coordinates 3-amino-2-oxopropyl phosphate. The Proton acceptor role is filled by H43. 1-deoxy-D-xylulose 5-phosphate contacts are provided by R45 and H50. E70 serves as the catalytic Proton acceptor. T100 contacts 1-deoxy-D-xylulose 5-phosphate. The active-site Proton donor is H191. Residues G192 and 213 to 214 each bind 3-amino-2-oxopropyl phosphate; that span reads GH.

Belongs to the PNP synthase family. Homooctamer; tetramer of dimers.

Its subcellular location is the cytoplasm. It carries out the reaction 3-amino-2-oxopropyl phosphate + 1-deoxy-D-xylulose 5-phosphate = pyridoxine 5'-phosphate + phosphate + 2 H2O + H(+). It participates in cofactor biosynthesis; pyridoxine 5'-phosphate biosynthesis; pyridoxine 5'-phosphate from D-erythrose 4-phosphate: step 5/5. In terms of biological role, catalyzes the complicated ring closure reaction between the two acyclic compounds 1-deoxy-D-xylulose-5-phosphate (DXP) and 3-amino-2-oxopropyl phosphate (1-amino-acetone-3-phosphate or AAP) to form pyridoxine 5'-phosphate (PNP) and inorganic phosphate. The protein is Pyridoxine 5'-phosphate synthase of Chromobacterium violaceum (strain ATCC 12472 / DSM 30191 / JCM 1249 / CCUG 213 / NBRC 12614 / NCIMB 9131 / NCTC 9757 / MK).